The following is a 535-amino-acid chain: Putative cysteine ligase BshC (535 aa).

A coiled-coil region spans residues 420-477 (DTFKALKESINSAYKNLQEKLAPLGADFQKLTGENLGRVMAQVKYLEERAQKYHREKN).

The protein belongs to the BshC family.

Functionally, involved in bacillithiol (BSH) biosynthesis. May catalyze the last step of the pathway, the addition of cysteine to glucosamine malate (GlcN-Mal) to generate BSH. The polypeptide is Putative cysteine ligase BshC (Carboxydothermus hydrogenoformans (strain ATCC BAA-161 / DSM 6008 / Z-2901)).